We begin with the raw amino-acid sequence, 195 residues long: Putative NADH dehydrogenase/NAD(P)H nitroreductase CC_0061 (195 aa).

Belongs to the nitroreductase family. HadB/RutE subfamily. FMN is required as a cofactor.

This Caulobacter vibrioides (strain ATCC 19089 / CIP 103742 / CB 15) (Caulobacter crescentus) protein is Putative NADH dehydrogenase/NAD(P)H nitroreductase CC_0061.